Consider the following 384-residue polypeptide: S-adenosylmethionine synthase (384 aa).

An ATP-binding site is contributed by histidine 15. Residue aspartate 17 participates in Mg(2+) binding. Glutamate 43 provides a ligand contact to K(+). Residues glutamate 56 and glutamine 99 each coordinate L-methionine. The interval 99 to 109 (QSPDINQGVDR) is flexible loop. ATP-binding positions include 164-166 (DAK), 230-231 (RF), aspartate 239, 245-246 (RK), alanine 262, and lysine 266. Aspartate 239 contributes to the L-methionine binding site. An L-methionine-binding site is contributed by lysine 270.

It belongs to the AdoMet synthase family. As to quaternary structure, homotetramer; dimer of dimers. Mg(2+) serves as cofactor. K(+) is required as a cofactor.

The protein localises to the cytoplasm. The enzyme catalyses L-methionine + ATP + H2O = S-adenosyl-L-methionine + phosphate + diphosphate. It functions in the pathway amino-acid biosynthesis; S-adenosyl-L-methionine biosynthesis; S-adenosyl-L-methionine from L-methionine: step 1/1. Catalyzes the formation of S-adenosylmethionine (AdoMet) from methionine and ATP. The overall synthetic reaction is composed of two sequential steps, AdoMet formation and the subsequent tripolyphosphate hydrolysis which occurs prior to release of AdoMet from the enzyme. This Proteus mirabilis (strain HI4320) protein is S-adenosylmethionine synthase.